A 353-amino-acid chain; its full sequence is CCN family member 3 (353 aa).

The N-terminal stretch at 1–26 (MEPGGGHSLPVLLLLLLLLLLRPSEV) is a signal peptide. Residues 29–103 (REAPCPRPCG…GGGTGICMVL (75 aa)) form the IGFBP N-terminal domain. Intrachain disulfides connect C33/C59, C37/C61, C41/C62, C48/C65, C73/C87, and C79/C100. In terms of domain architecture, VWFC spans 106–172 (DNCVFDGMIY…GECCEKWVCE (67 aa)). The 46-residue stretch at 203 to 248 (NCIEQTTEWSACSRSCGMGFSTRVTNRNQQCEMVKQTRLCMMRPCE) folds into the TSP type-1 domain. 5 cysteine pairs are disulfide-bonded: C260–C297, C277–C311, C288–C327, C291–C329, and C296–C333. The CTCK domain maps to 260 to 334 (CIRTKKSMKA…NTCVCHGNCP (75 aa)). N276 is a glycosylation site (N-linked (GlcNAc...) asparagine).

The protein belongs to the CCN family.

The protein resides in the secreted. Its subcellular location is the cytoplasm. It localises to the cell junction. The protein localises to the gap junction. Its function is as follows. Immediate-early protein likely to play a role in cell growth regulation. In Coturnix japonica (Japanese quail), this protein is CCN family member 3 (CCN3).